The following is a 291-amino-acid chain: Dihydroorotate dehydrogenase A (fumarate) (291 aa).

Residues serine 18 and 42 to 43 contribute to the FMN site; that span reads KS. Substrate is bound by residues lysine 42, 66–70, and asparagine 126; that span reads NAVGL. An FMN-binding site is contributed by asparagine 126. Catalysis depends on cysteine 129, which acts as the Nucleophile. Lysine 164 and isoleucine 190 together coordinate FMN. 191 to 192 serves as a coordination point for substrate; it reads NT. FMN-binding positions include glycine 216, 242 to 243, and 264 to 265; these read GG and GS.

It belongs to the dihydroorotate dehydrogenase family. Type 1 subfamily. As to quaternary structure, homodimer. FMN serves as cofactor.

Its subcellular location is the cytoplasm. It carries out the reaction (S)-dihydroorotate + fumarate = orotate + succinate. Its pathway is pyrimidine metabolism; UMP biosynthesis via de novo pathway. Its function is as follows. Catalyzes the conversion of dihydroorotate to orotate with fumarate as the electron acceptor. In Lacticaseibacillus paracasei (strain ATCC 334 / BCRC 17002 / CCUG 31169 / CIP 107868 / KCTC 3260 / NRRL B-441) (Lactobacillus paracasei), this protein is Dihydroorotate dehydrogenase A (fumarate) (pyrD).